A 283-amino-acid chain; its full sequence is Orotidine 5'-phosphate decarboxylase (283 aa).

Lys-97 acts as the Proton donor in catalysis.

The protein belongs to the OMP decarboxylase family. Type 2 subfamily.

It carries out the reaction orotidine 5'-phosphate + H(+) = UMP + CO2. Its pathway is pyrimidine metabolism; UMP biosynthesis via de novo pathway; UMP from orotate: step 2/2. The sequence is that of Orotidine 5'-phosphate decarboxylase from Clostridium botulinum (strain Loch Maree / Type A3).